A 354-amino-acid polypeptide reads, in one-letter code: tRNA-specific 2-thiouridylase MnmA (354 aa).

ATP contacts are provided by residues 7 to 14 (AMSGGVDS) and M33. The active-site Nucleophile is C94. Cysteines 94 and 192 form a disulfide. G118 contributes to the ATP binding site. The tract at residues 141 to 143 (KDQ) is interaction with tRNA. C192 acts as the Cysteine persulfide intermediate in catalysis. Residues 296–297 (RY) form an interaction with tRNA region.

Belongs to the MnmA/TRMU family.

Its subcellular location is the cytoplasm. It catalyses the reaction S-sulfanyl-L-cysteinyl-[protein] + uridine(34) in tRNA + AH2 + ATP = 2-thiouridine(34) in tRNA + L-cysteinyl-[protein] + A + AMP + diphosphate + H(+). In terms of biological role, catalyzes the 2-thiolation of uridine at the wobble position (U34) of tRNA, leading to the formation of s(2)U34. This chain is tRNA-specific 2-thiouridylase MnmA, found in Trichlorobacter lovleyi (strain ATCC BAA-1151 / DSM 17278 / SZ) (Geobacter lovleyi).